Consider the following 433-residue polypeptide: 3-phosphoshikimate 1-carboxyvinyltransferase (433 aa).

3-phosphoshikimate-binding residues include K23, S24, and R28. K23 provides a ligand contact to phosphoenolpyruvate. Phosphoenolpyruvate is bound by residues G95 and R123. 3-phosphoshikimate contacts are provided by S167, Q169, D317, and K344. Q169 contributes to the phosphoenolpyruvate binding site. D317 (proton acceptor) is an active-site residue. Positions 348 and 390 each coordinate phosphoenolpyruvate.

It belongs to the EPSP synthase family. Monomer.

The protein localises to the cytoplasm. The catalysed reaction is 3-phosphoshikimate + phosphoenolpyruvate = 5-O-(1-carboxyvinyl)-3-phosphoshikimate + phosphate. It functions in the pathway metabolic intermediate biosynthesis; chorismate biosynthesis; chorismate from D-erythrose 4-phosphate and phosphoenolpyruvate: step 6/7. Functionally, catalyzes the transfer of the enolpyruvyl moiety of phosphoenolpyruvate (PEP) to the 5-hydroxyl of shikimate-3-phosphate (S3P) to produce enolpyruvyl shikimate-3-phosphate and inorganic phosphate. In Staphylococcus epidermidis (strain ATCC 35984 / DSM 28319 / BCRC 17069 / CCUG 31568 / BM 3577 / RP62A), this protein is 3-phosphoshikimate 1-carboxyvinyltransferase.